The sequence spans 95 residues: DNA-directed RNA polymerase subunit Rpo11 (95 aa).

It belongs to the archaeal Rpo11/eukaryotic RPB11/RPC19 RNA polymerase subunit family. In terms of assembly, part of the RNA polymerase complex.

The protein resides in the cytoplasm. It carries out the reaction RNA(n) + a ribonucleoside 5'-triphosphate = RNA(n+1) + diphosphate. Its function is as follows. DNA-dependent RNA polymerase (RNAP) catalyzes the transcription of DNA into RNA using the four ribonucleoside triphosphates as substrates. This chain is DNA-directed RNA polymerase subunit Rpo11, found in Thermococcus sibiricus (strain DSM 12597 / MM 739).